The following is a 369-amino-acid chain: Bi-functional coumaroyl CoA and feruloyl CoA ortho-hydroxylase Diox1 (369 aa).

Residues I209–P319 form the Fe2OG dioxygenase domain. Y225 provides a ligand contact to 2-oxoglutarate. 3 residues coordinate Fe cation: H240, D242, and H300. 2-oxoglutarate is bound by residues R310 and S312.

Belongs to the iron/ascorbate-dependent oxidoreductase family. The cofactor is L-ascorbate. Fe(2+) serves as cofactor.

It carries out the reaction (E)-4-coumaroyl-CoA + 2-oxoglutarate + O2 = (E)-2,4-dihydroxycinnamoyl-CoA + succinate + CO2. The enzyme catalyses (E)-feruloyl-CoA + 2-oxoglutarate + O2 = (E)-6-hydroxyferuloyl-CoA + succinate + CO2. It participates in phenylpropanoid metabolism. In terms of biological role, 2-oxoglutarate (OG)- and Fe(II)-dependent dioxygenase (2OGD) involved in scopoletin and umbelliferone biosynthesis. Converts feruloyl CoA into 6'-hydroxyferuloyl CoA, and p-coumaroyl CoA into 2,4-dihydroxycinnamoyl-CoA. The chain is Bi-functional coumaroyl CoA and feruloyl CoA ortho-hydroxylase Diox1 from Ruta graveolens (Common rue).